We begin with the raw amino-acid sequence, 355 residues long: Galactoside 2-alpha-L-fucosyltransferase (355 aa).

The Cytoplasmic segment spans residues 1 to 15; sequence MRNVKGLFSYMTKTK. A helical; Signal-anchor for type II membrane protein transmembrane segment spans residues 16-36; the sequence is SFYISIIVIIFIIFIVNRMGP. At 37–355 the chain is on the lumenal side; the sequence is RNYNYKQIGT…MSRNGSIISK (319 aa). Asn92, Asn311, and Asn349 each carry an N-linked (GlcNAc...) asparagine glycan.

It belongs to the glycosyltransferase 11 family. As to expression, expression is restricted to the 20 intestinal cells in larvae and adult.

The protein localises to the golgi apparatus. It localises to the golgi stack membrane. The protein operates within protein modification; protein glycosylation. Selectively catalyzes the addition of fucose in alpha 1-2 linkage to Gal-beta-(1-&gt;4)-Xyl-beta-R, Gal-beta-(1-&gt;6)-GlcNAc-R, Gal-beta-(1-&gt;3)-Gal-beta-(1-&gt;4)-Glc and Gal-beta-(1-&gt;3)-Gal-beta-(1-&gt;4)-Xyl-R acceptors but not Gal-beta-(1-&gt;3)-GlcNAc-beta-(1-&gt;3)-Gal-beta-(1-&gt;4)-Glc. Unlike in mammals, unable to fucosylate Gal-beta-(1-&gt;4)-Glc-beta-R. The polypeptide is Galactoside 2-alpha-L-fucosyltransferase (Caenorhabditis elegans).